The sequence spans 279 residues: Aquaporin A (279 aa).

The Cytoplasmic segment spans residues 1–40 (MVKVVPLRFITYDPLKDPSKMIYRRPISKPVKAFKGFFSE). The helical transmembrane segment at 41 to 61 (FLGTLYLVYFCGGSVCAAFAV) threads the bilayer. Residues 62-69 (AGDSAARA) are Extracellular-facing. A helical membrane pass occupies residues 70-90 (LLGGLIQGMALAALIWAVSGV). The Cytoplasmic segment spans residues 91–114 (SGCNLNPAVTLANLLSGRVGLIDS). The short motif at 96-98 (NPA) is the NPA 1 element. Residues 115 to 135 (LYYVAAQILGCIAGAGILYGC) traverse the membrane as a helical segment. At 136–158 (LPNMYRIDLGVPHLAPGMNTGQA) the chain is on the extracellular side. A helical transmembrane segment spans residues 159 to 179 (FLMEMMLTSILCLCVLGTSVF). Topologically, residues 180–188 (NVWDRRLNR) are cytoplasmic. A helical membrane pass occupies residues 189–209 (IAPFAIGLALFIGVAIGFNFS). At 210–227 (GGALNPVRVLGPSIISGV) the chain is on the extracellular side. Positions 214 to 216 (NPV) match the NPA 2 motif. A helical transmembrane segment spans residues 228–248 (WSHHWVYWLGPIVGAILAAFI). The Cytoplasmic segment spans residues 249–279 (YRCLLQERFDVIERPGYIAPLIDPSTAVSSY).

Belongs to the MIP/aquaporin (TC 1.A.8) family.

It localises to the cell membrane. Functionally, may form a water-specific channel. Required for prolonged spore survival on fruiting bodies. The sequence is that of Aquaporin A (aqpA) from Dictyostelium discoideum (Social amoeba).